A 600-amino-acid chain; its full sequence is Sodium- and chloride-dependent betaine transporter (600 aa).

The interval M1–G31 is disordered. Topologically, residues M1 to D38 are cytoplasmic. Basic and acidic residues predominate over residues D12 to R30. The next 3 membrane-spanning stretches (helical) occupy residues F39–L59, F68–V88, and V116–Y136. The Extracellular segment spans residues M137–G207. An N-linked (GlcNAc...) asparagine glycan is attached at N165. Transmembrane regions (helical) follow at residues I208 to W228 and F237 to L257. N-linked (GlcNAc...) asparagine glycosylation occurs at N273. 7 consecutive transmembrane segments (helical) span residues A286–S306, M321–G341, V378–M398, S420–G440, G454–A474, F499–V519, and W536–F556. Topologically, residues T557–Q600 are cytoplasmic.

The protein belongs to the sodium:neurotransmitter symporter (SNF) family. Highly expressed in the head, the excretory canal, tail hypodermal cells, epidermis and vulval epithelial cells. Expressed in the excretory canal-associated neuron and in some non-amphidial sensory neurons in the head (at protein level).

The protein localises to the cell membrane. In terms of biological role, betaine transporter dependent on Na(+) and Cl(-) ions that functions primarily in the epidermis to clear betaine from the extracellular space. Elicits current in response to betaine but not in response to GABA, L-carnitine, sarcosine, glycine or dimethylglycine. This chain is Sodium- and chloride-dependent betaine transporter, found in Caenorhabditis elegans.